A 756-amino-acid chain; its full sequence is Serine/threonine-protein kinase tousled-like 1-B (756 aa).

Low complexity-rich tracts occupy residues 1–12 and 23–34; these read MSVQSNSNSSGS and STGSPTPGSVSP. Disordered regions lie at residues 1–56 and 69–185; these read MSVQ…LDPR and VSGN…QNSS. The segment covering 45–56 has biased composition (basic and acidic residues); it reads EGMDELHSLDPR. The span at 72–85 shows a compositional bias: gly residues; sequence NTGGSTGSASGGPK. Residues 93 to 103 are compositionally biased toward low complexity; it reads SSHSFGSLGSS. Residues 104 to 120 are compositionally biased toward basic and acidic residues; that stretch reads SDKESETPEKKHFESSR. The stretch at 243–268 forms a coiled coil; it reads DLRRQIDEQQKLLERFKERLNKCTTM. The tract at residues 339 to 375 is disordered; sequence KLLAKRKPSSTPSSQSPTPNESKQRKTKAVNGADNDP. Residues 347 to 357 show a composition bias toward low complexity; that stretch reads SSTPSSQSPTP. Residues 397–435 are a coiled coil; it reads FKLRLGHLKKEEAEIQAELERLERVRNLHIRELKRINNE. The Protein kinase domain maps to 450-728; that stretch reads YLLLHLLGRG…VHQLGSDSYL (279 aa). ATP contacts are provided by residues 456-464 and Lys-479; that span reads LGRGGFSEV. Asp-580 functions as the Proton acceptor in the catalytic mechanism. The interval 734 to 756 is disordered; that stretch reads RSNSSGNLQATPASPAPSGIISY. Residues 735-745 are compositionally biased toward polar residues; it reads SNSSGNLQATP.

It belongs to the protein kinase superfamily. Ser/Thr protein kinase family. It depends on Mg(2+) as a cofactor.

It localises to the nucleus. The catalysed reaction is L-seryl-[protein] + ATP = O-phospho-L-seryl-[protein] + ADP + H(+). The enzyme catalyses L-threonyl-[protein] + ATP = O-phospho-L-threonyl-[protein] + ADP + H(+). The sequence is that of Serine/threonine-protein kinase tousled-like 1-B (tlk1b) from Danio rerio (Zebrafish).